Consider the following 325-residue polypeptide: Olfactory receptor 14L1 (325 aa).

At 1 to 43 (MAQFNKNQLIACRRNGTTTSDFNQTEVAEFFLMGFSNSWDIQI) the chain is on the extracellular side. A helical transmembrane segment spans residues 44 to 64 (VHAALFFLVYLAAVIGNLLII). Residues 65–72 (ILTTLDVH) are Cytoplasmic-facing. A helical membrane pass occupies residues 73 to 93 (LQTPMYFFLRNLSFLDFCYIS). Residues 94-117 (VTIPKSIVSSLTHDTSISFFGCAL) lie on the Extracellular side of the membrane. The helical transmembrane segment at 118–138 (QAFFFMDLATTEVAILTVMSY) threads the bilayer. Residues 139-151 (DRYMAICRPLHYE) lie on the Cytoplasmic side of the membrane. Residues 152–172 (VIINQGVCLRMMAMSWLSGVI) traverse the membrane as a helical segment. The Extracellular portion of the chain corresponds to 173 to 214 (CGFMHVIATFSLPFCGRNRIRQFFCNIPQLLSLLDPKVITIE). A helical transmembrane segment spans residues 215-235 (IGVMVFGTSLVIISFVVITLS). The Cytoplasmic portion of the chain corresponds to 236 to 255 (YMYIFSVIMRIPSKEGRSKT). The chain crosses the membrane as a helical span at residues 256-276 (FSTCIPHLVVVTLFMISGSIA). Topologically, residues 277 to 289 (YVKPISNSPPVLD) are extracellular. A helical membrane pass occupies residues 290–310 (VFLSAFYTVVPPTLNPVIYSL). At 311 to 325 (RNRDMKAALRRQCGP) the chain is on the cytoplasmic side.

Belongs to the G-protein coupled receptor 1 family.

The protein localises to the cell membrane. Odorant receptor. In Homo sapiens (Human), this protein is Olfactory receptor 14L1.